We begin with the raw amino-acid sequence, 657 residues long: 1-deoxy-D-xylulose-5-phosphate synthase (657 aa).

Thiamine diphosphate is bound by residues histidine 73 and serine 113–alanine 115. Aspartate 145 contributes to the Mg(2+) binding site. Residues glycine 146–alanine 147, asparagine 175, tyrosine 293, and glutamate 375 contribute to the thiamine diphosphate site. A Mg(2+)-binding site is contributed by asparagine 175.

This sequence belongs to the transketolase family. DXPS subfamily. Homodimer. Mg(2+) is required as a cofactor. It depends on thiamine diphosphate as a cofactor.

It carries out the reaction D-glyceraldehyde 3-phosphate + pyruvate + H(+) = 1-deoxy-D-xylulose 5-phosphate + CO2. The protein operates within metabolic intermediate biosynthesis; 1-deoxy-D-xylulose 5-phosphate biosynthesis; 1-deoxy-D-xylulose 5-phosphate from D-glyceraldehyde 3-phosphate and pyruvate: step 1/1. Functionally, catalyzes the acyloin condensation reaction between C atoms 2 and 3 of pyruvate and glyceraldehyde 3-phosphate to yield 1-deoxy-D-xylulose-5-phosphate (DXP). This Renibacterium salmoninarum (strain ATCC 33209 / DSM 20767 / JCM 11484 / NBRC 15589 / NCIMB 2235) protein is 1-deoxy-D-xylulose-5-phosphate synthase.